Reading from the N-terminus, the 98-residue chain is NADH-ubiquinone oxidoreductase chain 4L (98 aa).

3 helical membrane passes run 1–21, 28–48, and 59–79; these read MMSINLNLIMAFSLALAGVLI, STLLCLEGMMLSLFILMALII, and APLILLVFSACEAGVGLALLV.

Belongs to the complex I subunit 4L family. As to quaternary structure, core subunit of respiratory chain NADH dehydrogenase (Complex I) which is composed of 45 different subunits.

The protein resides in the mitochondrion inner membrane. It carries out the reaction a ubiquinone + NADH + 5 H(+)(in) = a ubiquinol + NAD(+) + 4 H(+)(out). In terms of biological role, core subunit of the mitochondrial membrane respiratory chain NADH dehydrogenase (Complex I) which catalyzes electron transfer from NADH through the respiratory chain, using ubiquinone as an electron acceptor. Part of the enzyme membrane arm which is embedded in the lipid bilayer and involved in proton translocation. The sequence is that of NADH-ubiquinone oxidoreductase chain 4L (MT-ND4L) from Lagostrophus fasciatus (Banded hare-wallaby).